Here is a 175-residue protein sequence, read N- to C-terminus: Rubredoxin-1 (175 aa).

Rubredoxin-like domains are found at residues 1–53 and 119–170; these read MARY…FVLI and FLKW…YVLY. The Fe cation site is built by Cys6, Cys9, Cys39, Cys42, Cys124, Cys127, Cys157, and Cys160.

It belongs to the rubredoxin family. The cofactor is Fe(3+).

Its subcellular location is the cytoplasm. The protein operates within hydrocarbon metabolism; alkane degradation. Involved in the hydrocarbon hydroxylating system, which transfers electrons from NADH to rubredoxin reductase and then through rubredoxin to alkane 1 monooxygenase. The chain is Rubredoxin-1 (alkG) from Pseudomonas putida (Arthrobacter siderocapsulatus).